Here is a 156-residue protein sequence, read N- to C-terminus: Small ribosomal subunit protein uS7 (156 aa).

It belongs to the universal ribosomal protein uS7 family. As to quaternary structure, part of the 30S ribosomal subunit. Contacts proteins S9 and S11.

In terms of biological role, one of the primary rRNA binding proteins, it binds directly to 16S rRNA where it nucleates assembly of the head domain of the 30S subunit. Is located at the subunit interface close to the decoding center, probably blocks exit of the E-site tRNA. This is Small ribosomal subunit protein uS7 from Staphylococcus aureus (strain USA300).